Reading from the N-terminus, the 640-residue chain is Threonine--tRNA ligase (640 aa).

In terms of domain architecture, TGS spans 1–61; sequence MPTITLPDGS…ENDASLQIIT (61 aa). The segment at 242–533 is catalytic; it reads DHRKIGKRLG…LIEHYEGAFP (292 aa). Cys333, His384, and His510 together coordinate Zn(2+).

This sequence belongs to the class-II aminoacyl-tRNA synthetase family. In terms of assembly, homodimer. Zn(2+) serves as cofactor.

It is found in the cytoplasm. The catalysed reaction is tRNA(Thr) + L-threonine + ATP = L-threonyl-tRNA(Thr) + AMP + diphosphate + H(+). Its function is as follows. Catalyzes the attachment of threonine to tRNA(Thr) in a two-step reaction: L-threonine is first activated by ATP to form Thr-AMP and then transferred to the acceptor end of tRNA(Thr). Also edits incorrectly charged L-seryl-tRNA(Thr). This is Threonine--tRNA ligase from Pseudomonas savastanoi pv. phaseolicola (strain 1448A / Race 6) (Pseudomonas syringae pv. phaseolicola (strain 1448A / Race 6)).